We begin with the raw amino-acid sequence, 882 residues long: Translation initiation factor IF-2 (882 aa).

Residues 28–296 (GIRKSADDSV…LQQGFQKPAQ (269 aa)) form a disordered region. Over residues 67 to 81 (STLNIPGTGGKSKSV) the composition is skewed to polar residues. Residues 92–209 (VKRDPQEAER…RMAEENKWTD (118 aa)) are compositionally biased toward basic and acidic residues. Positions 244 to 258 (GRGRNAKAARPKKGN) are enriched in basic residues. Residues 259-272 (KHAESKADREEARA) show a composition bias toward basic and acidic residues. Residues 381-550 (PRAPVVTIMG…LLQAEVLELK (170 aa)) form the tr-type G domain. The segment at 390-397 (GHVDHGKT) is G1. 390 to 397 (GHVDHGKT) contacts GTP. Residues 415-419 (GITQH) are G2. The G3 stretch occupies residues 436–439 (DTPG). Residues 436–440 (DTPGH) and 490–493 (NKID) each bind GTP. The tract at residues 490–493 (NKID) is G4. The interval 526–528 (SAK) is G5. Lys800 is subject to N6-acetyllysine.

The protein belongs to the TRAFAC class translation factor GTPase superfamily. Classic translation factor GTPase family. IF-2 subfamily.

Its subcellular location is the cytoplasm. Its function is as follows. One of the essential components for the initiation of protein synthesis. Protects formylmethionyl-tRNA from spontaneous hydrolysis and promotes its binding to the 30S ribosomal subunits. Also involved in the hydrolysis of GTP during the formation of the 70S ribosomal complex. The polypeptide is Translation initiation factor IF-2 (Shigella boydii serotype 4 (strain Sb227)).